Consider the following 309-residue polypeptide: MKDWLFRIATCSIMTFSSLAAAQAEPLDVVATFSIIGDFAAKVGGDRIRLNVLVGPDSDTHVYEPRPADAIALAGADVVLTNGLEFEGFLTRLIAASGTDAAVATLTDGVETMEEPGGGHYHYIDGKAVFHAGAHDPHAWQAVPNAKVYVQNIAAAFCAADAEGCAAYQANAARYIGELDALDTEIRAAIAALPQDRRTVVVAHNAFRYFEAAYGVHFLSPQGVSTESEAAAADVAGLIREIRARNASAIFAENISDTRLLEQIAREAGLPLAGTLYSDALSGPDGPASNYIAMMRHNAGAIAAALAAR.

Residues 1–24 form the signal peptide; the sequence is MKDWLFRIATCSIMTFSSLAAAQA. His-61 contributes to the Zn(2+) binding site. Residues 117–132 form a D-loop region; that stretch reads GGGHYHYIDGKAVFHA. His-138 is a binding site for Zn(2+). An intrachain disulfide couples Cys-158 to Cys-165. Zn(2+) is bound at residue His-204. A Z-loop region spans residues 222–229; it reads QGVSTESE. Asp-279 provides a ligand contact to Zn(2+).

It belongs to the bacterial solute-binding protein 9 family. In terms of assembly, monomer.

Its subcellular location is the periplasm. Part of the ATP-binding cassette (ABC) transport system AztABCD involved in zinc import. Binds zinc with high affinity and specificity and delivers it to the membrane permease for translocation into the cytoplasm. This chain is High-affinity zinc uptake system protein AztC, found in Paracoccus denitrificans (strain Pd 1222).